A 565-amino-acid chain; its full sequence is NAD-dependent malic enzyme (565 aa).

The active-site Proton donor is Tyr-104. Arg-157 contributes to the NAD(+) binding site. Lys-175 (proton acceptor) is an active-site residue. Residues Glu-246, Asp-247, and Asp-270 each coordinate a divalent metal cation. Positions 270 and 418 each coordinate NAD(+).

This sequence belongs to the malic enzymes family. Homotetramer. Requires Mg(2+) as cofactor. Mn(2+) serves as cofactor.

It carries out the reaction (S)-malate + NAD(+) = pyruvate + CO2 + NADH. The catalysed reaction is oxaloacetate + H(+) = pyruvate + CO2. This is NAD-dependent malic enzyme from Salmonella dublin (strain CT_02021853).